The primary structure comprises 511 residues: Cytochrome P450 4A7 (511 aa).

The propeptide occupies 1 to 4 (MSVS). The heme site is built by glutamate 322 and cysteine 458.

It belongs to the cytochrome P450 family. Heme serves as cofactor. In terms of tissue distribution, liver, kidney, small intestine.

It is found in the endoplasmic reticulum membrane. The protein resides in the microsome membrane. It carries out the reaction an omega-methyl-long-chain fatty acid + reduced [NADPH--hemoprotein reductase] + O2 = an omega-hydroxy-long-chain fatty acid + oxidized [NADPH--hemoprotein reductase] + H2O + H(+). Its function is as follows. Cytochromes P450 are a group of heme-thiolate monooxygenases. In liver microsomes, this enzyme is involved in an NADPH-dependent electron transport pathway. It oxidizes a variety of structurally unrelated compounds, including steroids, fatty acids, and xenobiotics. The kidney P-450 system is rather specialized for the omega-hydroxylation of fatty acids. Both P450-KA1 and P450-KA2 catalyze the omega- and (omega-1)-hydroxylation of various fatty acids with no drug-metabolizing activity, and hydroxylate prostaglandin A1 and A2 solely at the omega-position. The chain is Cytochrome P450 4A7 (CYP4A7) from Oryctolagus cuniculus (Rabbit).